Consider the following 241-residue polypeptide: NH(3)-dependent NAD(+) synthetase (241 aa).

Residue 27–34 (GISGGIDS) coordinates ATP. Position 33 (D33) interacts with Mg(2+). Residue R109 participates in deamido-NAD(+) binding. Residue T129 coordinates ATP. Position 134 (E134) interacts with Mg(2+). Deamido-NAD(+)-binding residues include K142 and D149. The ATP site is built by K158 and T180. 231–232 (HK) contributes to the deamido-NAD(+) binding site.

Belongs to the NAD synthetase family. Homodimer.

The enzyme catalyses deamido-NAD(+) + NH4(+) + ATP = AMP + diphosphate + NAD(+) + H(+). It participates in cofactor biosynthesis; NAD(+) biosynthesis; NAD(+) from deamido-NAD(+) (ammonia route): step 1/1. Functionally, catalyzes the ATP-dependent amidation of deamido-NAD to form NAD. Uses ammonia as a nitrogen source. This is NH(3)-dependent NAD(+) synthetase from Thermoplasma acidophilum (strain ATCC 25905 / DSM 1728 / JCM 9062 / NBRC 15155 / AMRC-C165).